The primary structure comprises 490 residues: Interferon-induced protein with tetratricopeptide repeats 3 (490 aa).

TPR repeat units lie at residues 51-84 (ATMYNLLAYIKHLDGNNEAALECLRQAEELIQQE), 94-127 (LVTWGNYAWVYYHLGRLSDAQIYVDKVKQTCKKF), 136-169 (SELDCEEGWTQLKCGRNERAKVCFEKALEEKPNN), 172-206 (FSSGLAIAMYHLDNHPEKQFSTDVLKQAIELSPDN), 207-240 (QYVKVLLGLKLQKMNKEAEGEQFVEEALEKSPCQ), 241-274 (TDVLRSAAKFYRRKGDLDKAIELFQRVLESTPNN), 415-448 (PNYWYLQGLIHKQNGDLLQAAKCYEKELGRLLRD), and 450-481 (PSGIGSIFLSASELEDGSEEMGQGAVSSSPRE). Phosphoserine is present on residues serine 203 and serine 237. Positions 467-490 (SEEMGQGAVSSSPRELLSNSEQLN) are disordered. A compositionally biased stretch (polar residues) spans 474–490 (AVSSSPRELLSNSEQLN). Serine 478 carries the post-translational modification Phosphoserine.

It belongs to the IFIT family. As to quaternary structure, component of an interferon-dependent multiprotein complex, at least composed of IFIT1, IFIT2 and IFIT3. Interacts with IFIT1 and IFIT2. Interacts (via N-terminus) with MAVS, TBK1, TRAF6 and RIGI. Interacts with COPS5. As to expression, expression significantly higher in peripheral blood mononuclear cells (PBMCs) and monocytes from systemic lupus erythematosus (SLE) patients than in those from healthy individuals (at protein level). Spleen, lung, leukocytes, lymph nodes, placenta, bone marrow and fetal liver.

The protein localises to the cytoplasm. It localises to the mitochondrion. Its function is as follows. IFN-induced antiviral protein which acts as an inhibitor of cellular as well as viral processes, cell migration, proliferation, signaling, and viral replication. Enhances MAVS-mediated host antiviral responses by serving as an adapter bridging TBK1 to MAVS which leads to the activation of TBK1 and phosphorylation of IRF3 and phosphorylated IRF3 translocates into nucleus to promote antiviral gene transcription. Exhibits an antiproliferative activity via the up-regulation of cell cycle negative regulators CDKN1A/p21 and CDKN1B/p27. Normally, CDKN1B/p27 turnover is regulated by COPS5, which binds CDKN1B/p27 in the nucleus and exports it to the cytoplasm for ubiquitin-dependent degradation. IFIT3 sequesters COPS5 in the cytoplasm, thereby increasing nuclear CDKN1B/p27 protein levels. Up-regulates CDKN1A/p21 by down-regulating MYC, a repressor of CDKN1A/p21. Can negatively regulate the apoptotic effects of IFIT2. The polypeptide is Interferon-induced protein with tetratricopeptide repeats 3 (IFIT3) (Homo sapiens (Human)).